A 560-amino-acid polypeptide reads, in one-letter code: OTU domain-containing protein 5-A (560 aa).

2 disordered regions span residues 1–100 (MTIL…MACV) and 141–190 (GGGT…QSED). Positions 17-32 (DHPDDPDRRTGSDPHQ) are enriched in basic and acidic residues. The segment covering 141 to 163 (GGGTGPGAAGGGGGGGGGGGVGG) has biased composition (gly residues). The 124-residue stretch at 211 to 334 (FVIKKMKEDG…NIHYNSVVNP (124 aa)) folds into the OTU domain. The interval 216–222 (MKEDGAC) is cys-loop. Asp219 is a catalytic residue. The active-site Nucleophile is Cys222. The tract at residues 271-281 (KRKNNCHGNHI) is variable-loop. The his-loop stretch occupies residues 322–327 (YHRNIH). His327 is an active-site residue. Residues 411 to 496 (ARQPRKASAT…ACVGPDRPTS (86 aa)) are disordered. 2 stretches are compositionally biased toward low complexity: residues 417 to 430 (ASAT…AASS) and 437 to 448 (ARSPRQRSSAPS).

The protein belongs to the peptidase C85 family.

It carries out the reaction Thiol-dependent hydrolysis of ester, thioester, amide, peptide and isopeptide bonds formed by the C-terminal Gly of ubiquitin (a 76-residue protein attached to proteins as an intracellular targeting signal).. Its function is as follows. Deubiquitinating enzyme that may function as negative regulator of the innate immune system. Has peptidase activity towards 'Lys-48'- and 'Lys-63'-linked polyubiquitin chains. Can also cleave 'Lys-11'-linked ubiquitin chains (in vitro). The protein is OTU domain-containing protein 5-A (otud5a) of Danio rerio (Zebrafish).